A 172-amino-acid polypeptide reads, in one-letter code: uncharacterized protein (172 aa).

This is an uncharacterized protein from Bacillus subtilis (strain 168).